The sequence spans 20 residues: Unknown protein NF045 from 2D-PAGE (20 aa).

In Naegleria fowleri (Brain eating amoeba), this protein is Unknown protein NF045 from 2D-PAGE.